The following is a 576-amino-acid chain: Arginine--tRNA ligase (576 aa).

The 'HIGH' region motif lies at 126–136 (ANPTGPMHIGH).

It belongs to the class-I aminoacyl-tRNA synthetase family. As to quaternary structure, monomer.

Its subcellular location is the cytoplasm. It catalyses the reaction tRNA(Arg) + L-arginine + ATP = L-arginyl-tRNA(Arg) + AMP + diphosphate. The chain is Arginine--tRNA ligase from Rickettsia felis (strain ATCC VR-1525 / URRWXCal2) (Rickettsia azadi).